The following is a 386-amino-acid chain: WD repeat-containing protein 89 (386 aa).

6 WD repeats span residues 21–65 (KEPT…VIRE), 68–106 (GYPGLNGVKFANSHDSVYSSCTDGTVKCWDARLASGKPV), 111–155 (GYPS…QDLS), 167–207 (THSD…EDDA), 213–253 (NSVS…TDEP), and 318–357 (GHAATVRSFCWNMQDDSLLTGGEDAQLLLWKPGAVEKTFT).

In Bos taurus (Bovine), this protein is WD repeat-containing protein 89 (WDR89).